We begin with the raw amino-acid sequence, 140 residues long: MPHARTETSVGTYESHSTSELEDLTEPEQRELKTKLTKLEAEIVTLRHVLAAKERRCGELKRKLGLTALVGLRQNLSKSWLDVQVSNTYVKQKTSAALSTMGTLICRKLGGVKKSATFRSFEGLMGTIKSKVSGGKRAWP.

Positions 1-28 (MPHARTETSVGTYESHSTSELEDLTEPE) are disordered. Over residues 7-18 (ETSVGTYESHST) the composition is skewed to polar residues. Residues 28-57 (EQRELKTKLTKLEAEIVTLRHVLAAKERRC) are a coiled coil.

It belongs to the TPD52 family. As to quaternary structure, interacts with TPD52L2. As to expression, specifically expressed in testis. Expressed at 5.6-fold higher levels in adult testis than in fetal testis.

The sequence is that of Tumor protein D55 (TPD52L3) from Homo sapiens (Human).